Consider the following 74-residue polypeptide: Exodeoxyribonuclease 7 small subunit (74 aa).

It belongs to the XseB family. In terms of assembly, heterooligomer composed of large and small subunits.

The protein localises to the cytoplasm. It catalyses the reaction Exonucleolytic cleavage in either 5'- to 3'- or 3'- to 5'-direction to yield nucleoside 5'-phosphates.. Functionally, bidirectionally degrades single-stranded DNA into large acid-insoluble oligonucleotides, which are then degraded further into small acid-soluble oligonucleotides. This is Exodeoxyribonuclease 7 small subunit from Clostridium botulinum (strain Eklund 17B / Type B).